A 505-amino-acid polypeptide reads, in one-letter code: uncharacterized protein (505 aa).

Histidine 431 acts as the Proton acceptor in catalysis.

The protein belongs to the GMC oxidoreductase family. It depends on FAD as a cofactor.

This is an uncharacterized protein from Sinorhizobium fredii (strain NBRC 101917 / NGR234).